Here is a 290-residue protein sequence, read N- to C-terminus: 33 kDa chaperonin (290 aa).

Cystine bridges form between Cys-231–Cys-233 and Cys-263–Cys-266.

Belongs to the HSP33 family. Post-translationally, under oxidizing conditions two disulfide bonds are formed involving the reactive cysteines. Under reducing conditions zinc is bound to the reactive cysteines and the protein is inactive.

The protein resides in the cytoplasm. In terms of biological role, redox regulated molecular chaperone. Protects both thermally unfolding and oxidatively damaged proteins from irreversible aggregation. Plays an important role in the bacterial defense system toward oxidative stress. The polypeptide is 33 kDa chaperonin (Thermotoga sp. (strain RQ2)).